Here is a 156-residue protein sequence, read N- to C-terminus: Lipoprotein signal peptidase (156 aa).

The next 3 membrane-spanning stretches (helical) occupy residues 5–25 (FKFI…DQWV), 64–84 (YLHL…KTLL), and 89–109 (IAFG…FIHG). Active-site residues include Asp-113 and Asp-130. The chain crosses the membrane as a helical span at residues 122–142 (NFAIFNVADVMINISVALILI).

Belongs to the peptidase A8 family.

It is found in the cell inner membrane. The catalysed reaction is Release of signal peptides from bacterial membrane prolipoproteins. Hydrolyzes -Xaa-Yaa-Zaa-|-(S,diacylglyceryl)Cys-, in which Xaa is hydrophobic (preferably Leu), and Yaa (Ala or Ser) and Zaa (Gly or Ala) have small, neutral side chains.. It participates in protein modification; lipoprotein biosynthesis (signal peptide cleavage). Its function is as follows. This protein specifically catalyzes the removal of signal peptides from prolipoproteins. The protein is Lipoprotein signal peptidase of Campylobacter jejuni subsp. jejuni serotype O:23/36 (strain 81-176).